The following is a 285-amino-acid chain: Bifunctional protein FolD (285 aa).

NADP(+)-binding positions include 165–167 (GRS) and Ser-190.

The protein belongs to the tetrahydrofolate dehydrogenase/cyclohydrolase family. As to quaternary structure, homodimer.

The catalysed reaction is (6R)-5,10-methylene-5,6,7,8-tetrahydrofolate + NADP(+) = (6R)-5,10-methenyltetrahydrofolate + NADPH. The enzyme catalyses (6R)-5,10-methenyltetrahydrofolate + H2O = (6R)-10-formyltetrahydrofolate + H(+). It functions in the pathway one-carbon metabolism; tetrahydrofolate interconversion. In terms of biological role, catalyzes the oxidation of 5,10-methylenetetrahydrofolate to 5,10-methenyltetrahydrofolate and then the hydrolysis of 5,10-methenyltetrahydrofolate to 10-formyltetrahydrofolate. The chain is Bifunctional protein FolD from Burkholderia thailandensis (strain ATCC 700388 / DSM 13276 / CCUG 48851 / CIP 106301 / E264).